Consider the following 407-residue polypeptide: Probable tRNA sulfurtransferase (407 aa).

In terms of domain architecture, THUMP spans 61–165; sequence NEITYRLSKI…LDAIYMYEEV (105 aa). ATP is bound by residues 183–184, 208–209, R265, G287, and Q296; these read ML and HF.

Belongs to the ThiI family.

The protein resides in the cytoplasm. The enzyme catalyses [ThiI sulfur-carrier protein]-S-sulfanyl-L-cysteine + a uridine in tRNA + 2 reduced [2Fe-2S]-[ferredoxin] + ATP + H(+) = [ThiI sulfur-carrier protein]-L-cysteine + a 4-thiouridine in tRNA + 2 oxidized [2Fe-2S]-[ferredoxin] + AMP + diphosphate. It catalyses the reaction [ThiS sulfur-carrier protein]-C-terminal Gly-Gly-AMP + S-sulfanyl-L-cysteinyl-[cysteine desulfurase] + AH2 = [ThiS sulfur-carrier protein]-C-terminal-Gly-aminoethanethioate + L-cysteinyl-[cysteine desulfurase] + A + AMP + 2 H(+). Its pathway is cofactor biosynthesis; thiamine diphosphate biosynthesis. In terms of biological role, catalyzes the ATP-dependent transfer of a sulfur to tRNA to produce 4-thiouridine in position 8 of tRNAs, which functions as a near-UV photosensor. Also catalyzes the transfer of sulfur to the sulfur carrier protein ThiS, forming ThiS-thiocarboxylate. This is a step in the synthesis of thiazole, in the thiamine biosynthesis pathway. The sulfur is donated as persulfide by IscS. The polypeptide is Probable tRNA sulfurtransferase (Staphylococcus aureus (strain JH1)).